The following is a 345-amino-acid chain: Platelet-derived growth factor C (345 aa).

An N-terminal signal peptide occupies residues 1 to 22; sequence MSLFGLLLLTSALAGQRQGTQA. N25 and N55 each carry an N-linked (GlcNAc...) asparagine glycan. A CUB domain is found at 46–163; the sequence is HERIITVSTN…PGFCIHYNIV (118 aa). 4 cysteine pairs are disulfide-bonded: C104–C124, C250–C294, C280–C335, and C287–C337.

This sequence belongs to the PDGF/VEGF growth factor family. In terms of assembly, homodimer; disulfide-linked. Interacts with PDGFRA homodimers, and with heterodimers formed by PDGFRA and PDGFRB. Interacts (via CUB domain) with PLAT (via kringle domain). In terms of processing, proteolytic removal of the N-terminal CUB domain releasing the core domain is necessary for unmasking the receptor-binding epitopes of the core domain. Cleavage after basic residues in the hinge region (region connecting the CUB and growth factor domains) gives rise to the receptor-binding form. Cleaved by PLAT and PLG. Sumoylated with SUMO1. Post-translationally, N-glycosylated. In terms of tissue distribution, expressed in the fallopian tube, vascular smooth muscle cells in kidney, breast and colon and in visceral smooth muscle of the gastrointestinal tract. Highly expressed in retinal pigment epithelia. Expressed in medulloblastoma. In the kidney, constitutively expressed in parietal epithelial cells of Bowman's capsule, tubular epithelial cells and in arterial endothelial cells (at protein level). Highly expressed in the platelets, prostate, testis and uterus. Higher expression is observed in uterine leiomyomata. Weaker expression in the spleen, thymus, heart, pancreas, liver, ovary cells and small intestine, and negligible expression in the colon and peripheral blood leukocytes.

The protein resides in the cytoplasm. It localises to the cytosol. It is found in the secreted. Its subcellular location is the nucleus. The protein localises to the cytoplasmic granule. The protein resides in the cell membrane. Growth factor that plays an essential role in the regulation of embryonic development, cell proliferation, cell migration, survival and chemotaxis. Potent mitogen and chemoattractant for cells of mesenchymal origin. Required for normal skeleton formation during embryonic development, especially for normal development of the craniofacial skeleton and for normal development of the palate. Required for normal skin morphogenesis during embryonic development. Plays an important role in wound healing, where it appears to be involved in three stages: inflammation, proliferation and remodeling. Plays an important role in angiogenesis and blood vessel development. Involved in fibrotic processes, in which transformation of interstitial fibroblasts into myofibroblasts plus collagen deposition occurs. The CUB domain has mitogenic activity in coronary artery smooth muscle cells, suggesting a role beyond the maintenance of the latency of the PDGF domain. In the nucleus, PDGFC seems to have additional function. This is Platelet-derived growth factor C (PDGFC) from Homo sapiens (Human).